Consider the following 185-residue polypeptide: Peptidyl-tRNA hydrolase (185 aa).

Tyrosine 14 serves as a coordination point for tRNA. The Proton acceptor role is filled by histidine 19. The tRNA site is built by tyrosine 64, asparagine 66, and asparagine 112.

This sequence belongs to the PTH family. As to quaternary structure, monomer.

Its subcellular location is the cytoplasm. The enzyme catalyses an N-acyl-L-alpha-aminoacyl-tRNA + H2O = an N-acyl-L-amino acid + a tRNA + H(+). Its function is as follows. Hydrolyzes ribosome-free peptidyl-tRNAs (with 1 or more amino acids incorporated), which drop off the ribosome during protein synthesis, or as a result of ribosome stalling. In terms of biological role, catalyzes the release of premature peptidyl moieties from peptidyl-tRNA molecules trapped in stalled 50S ribosomal subunits, and thus maintains levels of free tRNAs and 50S ribosomes. The sequence is that of Peptidyl-tRNA hydrolase from Lactobacillus helveticus (strain DPC 4571).